Here is a 319-residue protein sequence, read N- to C-terminus: Dehydrogenase/reductase SDR family member 9 (319 aa).

Positions 1–17 (MLFWVLGLLILCGFLWT) are cleaved as a signal peptide. Residues 34–58 (ITGC…HVIA) and D83 contribute to the NAD(+) site. Substrate is bound at residue S164. Residue Y176 is the Proton acceptor of the active site. Position 180 (K180) interacts with NAD(+).

The protein belongs to the short-chain dehydrogenases/reductases (SDR) family. In terms of assembly, homotetramer. Highly expressed in trachea and epidermis. Detected at lower levels in spinal cord, bone marrow, brain, tongue, esophagus, heart, colon, testis, placenta, lung, skeletal muscle and lymph node.

It localises to the microsome membrane. It is found in the endoplasmic reticulum membrane. It catalyses the reaction 3beta-hydroxy-5alpha-pregnane-20-one + NAD(+) = 5alpha-pregnane-3,20-dione + NADH + H(+). The catalysed reaction is 17beta-hydroxy-5alpha-androstan-3-one + NAD(+) = 5alpha-androstan-3,17-dione + NADH + H(+). It carries out the reaction androsterone + NAD(+) = 5alpha-androstan-3,17-dione + NADH + H(+). The enzyme catalyses 5alpha-androstane-3alpha,17beta-diol + NAD(+) = 17beta-hydroxy-5alpha-androstan-3-one + NADH + H(+). It catalyses the reaction all-trans-retinol + NAD(+) = all-trans-retinal + NADH + H(+). The catalysed reaction is 3alpha-hydroxy-5alpha-pregnan-20-one + NAD(+) = 5alpha-pregnane-3,20-dione + NADH + H(+). In terms of biological role, 3-alpha-hydroxysteroid dehydrogenase that converts 3-alpha-tetrahydroprogesterone (allopregnanolone) to dihydroxyprogesterone and 3-alpha-androstanediol to dihydroxyprogesterone. Also plays a role in the biosynthesis of retinoic acid from retinaldehyde. Can utilize both NADH and NADPH. This is Dehydrogenase/reductase SDR family member 9 (DHRS9) from Homo sapiens (Human).